The chain runs to 245 residues: DNA repair protein RecO (245 aa).

Belongs to the RecO family.

Functionally, involved in DNA repair and RecF pathway recombination. In Erwinia tasmaniensis (strain DSM 17950 / CFBP 7177 / CIP 109463 / NCPPB 4357 / Et1/99), this protein is DNA repair protein RecO.